Reading from the N-terminus, the 599-residue chain is Elongation factor 4 (599 aa).

A tr-type G domain is found at 2–184 (KHIRNFSIIA…RLVRDIPAPE (183 aa)). Residues 14–19 (DHGKST) and 131–134 (NKID) each bind GTP.

This sequence belongs to the TRAFAC class translation factor GTPase superfamily. Classic translation factor GTPase family. LepA subfamily.

It localises to the cell inner membrane. The enzyme catalyses GTP + H2O = GDP + phosphate + H(+). In terms of biological role, required for accurate and efficient protein synthesis under certain stress conditions. May act as a fidelity factor of the translation reaction, by catalyzing a one-codon backward translocation of tRNAs on improperly translocated ribosomes. Back-translocation proceeds from a post-translocation (POST) complex to a pre-translocation (PRE) complex, thus giving elongation factor G a second chance to translocate the tRNAs correctly. Binds to ribosomes in a GTP-dependent manner. The polypeptide is Elongation factor 4 (Yersinia pestis bv. Antiqua (strain Antiqua)).